The primary structure comprises 816 residues: Neuroligin-4, Y-linked (816 aa).

An N-terminal signal peptide occupies residues 1-43; it reads MLRPQGLLWLPLLFTSVCVMLNSNVLLWITALAIKFTLIDSQA. Residues 44 to 676 lie on the Extracellular side of the membrane; the sequence is QYPVVNTNYG…TKRDYSTELS (633 aa). Residue N102 is glycosylated (N-linked (GlcNAc...) asparagine). 2 disulfides stabilise this stretch: C110–C146 and C306–C317. The interaction with NRXN1 stretch occupies residues 359 to 364; the sequence is QGEFLN. A disulfide bond links C476 and C510. N511 carries an N-linked (GlcNAc...) asparagine glycan. The disordered stretch occupies residues 636–659; that stretch reads TKRPAITPANNPKHSKDPHKTGPE. A compositionally biased stretch (basic and acidic residues) spans 649 to 658; it reads HSKDPHKTGP. Residues 677–697 traverse the membrane as a helical segment; the sequence is VTIAVGASLLFLNILAFAALY. The Cytoplasmic portion of the chain corresponds to 698 to 816; that stretch reads YKKDKRRHET…LPHGHSTTRV (119 aa). Residue S712 is modified to Phosphoserine.

The protein belongs to the type-B carboxylesterase/lipase family. As to quaternary structure, homodimer. Interacts with NRXN1 in a calcium-dependent manner. Interaction with neurexins is mediated by heparan sulfate glycan modification on neurexin. Interacts through its C-terminus with DLG4/PSD-95 third PDZ domain. Expressed in fetal and adult brain, prostate and testis.

The protein localises to the cell membrane. The protein resides in the postsynaptic density membrane. Cell surface protein involved in cell-cell-interactions via its interactions with neurexin family members. This is Neuroligin-4, Y-linked (NLGN4Y) from Homo sapiens (Human).